Reading from the N-terminus, the 570-residue chain is Phosphocholine hydrolase Lem3 (570 aa).

It is found in the secreted. The protein localises to the host cytoplasm. It catalyses the reaction [Rab1 protein]-O-phosphocholine-L-serine + H2O = [Rab1 protein]-L-serine + phosphocholine + H(+). In terms of biological role, virulence effector that plays a role in hijacking the host vesicular trafficking by recruiting the small guanosine triphosphatase (GTPase) Rab1 to the cytosolic face of the Legionella-containing vacuole (LCVs). Acts as a phosphocholine hydrolase by mediating the hydrolysis of phosphocholine to Ser residues of host RAB1 (RAB1A, RAB1B or RAB1C). Dephosphocholination of target proteins restores accessibility to GTPase effector LepB. Can act on both GDP-bound and GTP-bound Rab proteins. This Legionella pneumophila subsp. pneumophila (strain Philadelphia 1 / ATCC 33152 / DSM 7513) protein is Phosphocholine hydrolase Lem3 (lem3).